A 623-amino-acid polypeptide reads, in one-letter code: Serine/threonine-protein kinase ArnS (623 aa).

2 consecutive transmembrane segments (helical) span residues 13–33 (MILI…GIVL) and 49–69 (VYLI…QSLI). Residues 317-623 (YRVIEVIGLG…SYDIVKILEG (307 aa)) form the Protein kinase domain. Residues 323-331 (IGLGGNGYV) and K344 each bind ATP. D460 serves as the catalytic Proton acceptor.

The protein belongs to the protein kinase superfamily. Ser/Thr protein kinase family. Autophosphorylated.

Its subcellular location is the cell membrane. The enzyme catalyses L-seryl-[protein] + ATP = O-phospho-L-seryl-[protein] + ADP + H(+). It catalyses the reaction L-threonyl-[protein] + ATP = O-phospho-L-threonyl-[protein] + ADP + H(+). Autophosphorylation is stimulated by Mn(2+). Its function is as follows. Plays an essential role in the controlled expression of archaellum components during starvation-induced motility. May inhibit arnR transcription and promote ArnR translation. The polypeptide is Serine/threonine-protein kinase ArnS (Sulfolobus acidocaldarius (strain ATCC 33909 / DSM 639 / JCM 8929 / NBRC 15157 / NCIMB 11770)).